Consider the following 273-residue polypeptide: 4-hydroxy-tetrahydrodipicolinate reductase (273 aa).

NAD(+) contacts are provided by residues 12–17 and Glu38; that span reads GAGGRM. Residue Arg39 participates in NADP(+) binding. Residues 102–104 and 126–129 each bind NAD(+); these read GTT and AANF. Catalysis depends on His159, which acts as the Proton donor/acceptor. His160 provides a ligand contact to (S)-2,3,4,5-tetrahydrodipicolinate. Lys163 acts as the Proton donor in catalysis. 169–170 serves as a coordination point for (S)-2,3,4,5-tetrahydrodipicolinate; the sequence is GT.

This sequence belongs to the DapB family. As to quaternary structure, homotetramer.

The protein localises to the cytoplasm. The catalysed reaction is (S)-2,3,4,5-tetrahydrodipicolinate + NAD(+) + H2O = (2S,4S)-4-hydroxy-2,3,4,5-tetrahydrodipicolinate + NADH + H(+). The enzyme catalyses (S)-2,3,4,5-tetrahydrodipicolinate + NADP(+) + H2O = (2S,4S)-4-hydroxy-2,3,4,5-tetrahydrodipicolinate + NADPH + H(+). It functions in the pathway amino-acid biosynthesis; L-lysine biosynthesis via DAP pathway; (S)-tetrahydrodipicolinate from L-aspartate: step 4/4. Functionally, catalyzes the conversion of 4-hydroxy-tetrahydrodipicolinate (HTPA) to tetrahydrodipicolinate. This is 4-hydroxy-tetrahydrodipicolinate reductase from Salmonella agona (strain SL483).